The following is a 468-amino-acid chain: Serine--tRNA ligase (468 aa).

Thr-272–Glu-274 is an L-serine binding site. Arg-303 to Glu-305 is a binding site for ATP. Residue Glu-326 participates in L-serine binding. Glu-390–Ser-393 lines the ATP pocket. Residue Ser-426 participates in L-serine binding.

The protein belongs to the class-II aminoacyl-tRNA synthetase family. Type-1 seryl-tRNA synthetase subfamily. In terms of assembly, homodimer. The tRNA molecule binds across the dimer.

It localises to the cytoplasm. The catalysed reaction is tRNA(Ser) + L-serine + ATP = L-seryl-tRNA(Ser) + AMP + diphosphate + H(+). It carries out the reaction tRNA(Sec) + L-serine + ATP = L-seryl-tRNA(Sec) + AMP + diphosphate + H(+). It participates in aminoacyl-tRNA biosynthesis; selenocysteinyl-tRNA(Sec) biosynthesis; L-seryl-tRNA(Sec) from L-serine and tRNA(Sec): step 1/1. Its function is as follows. Catalyzes the attachment of serine to tRNA(Ser). Is also able to aminoacylate tRNA(Sec) with serine, to form the misacylated tRNA L-seryl-tRNA(Sec), which will be further converted into selenocysteinyl-tRNA(Sec). This chain is Serine--tRNA ligase, found in Xanthobacter autotrophicus (strain ATCC BAA-1158 / Py2).